A 139-amino-acid polypeptide reads, in one-letter code: Protein FAM216B (139 aa).

Belongs to the FAM216 family.

The chain is Protein FAM216B (FAM216B) from Homo sapiens (Human).